A 174-amino-acid chain; its full sequence is uncharacterized protein (174 aa).

Residues 138-174 are disordered; that stretch reads VNLTSKSSGRSDEEGTTRRAPVLKTRADFVSRKDKHR. Over residues 162 to 174 the composition is skewed to basic and acidic residues; sequence TRADFVSRKDKHR.

This is an uncharacterized protein from Bos taurus (Bovine).